Consider the following 195-residue polypeptide: Protein lin-28 homolog A (195 aa).

The CSD domain occupies 33 to 106 (QGSGVCKWFN…GLESTRVTGP (74 aa)). Positions 98-126 (LESTRVTGPGGAPCIGSERRPKVKGQQKR) are disordered. The interval 107-130 (GGAPCIGSERRPKVKGQQKRRQKG) is flexible linker. CCHC-type zinc fingers lie at residues 131-148 (DRCYNCGGLDHHAKECKL) and 153-170 (KKCHFCQSPNHMVAQCPA). Zn(2+) is bound by residues cysteine 133, cysteine 136, histidine 141, cysteine 146, cysteine 155, cysteine 158, histidine 163, and cysteine 168. The disordered stretch occupies residues 175–195 (AANLEEQPISEEQELIPETME). The span at 182 to 195 (PISEEQELIPETME) shows a compositional bias: acidic residues.

This sequence belongs to the lin-28 family. As to quaternary structure, monomer.

It localises to the cytoplasm. It is found in the rough endoplasmic reticulum. The protein localises to the P-body. The protein resides in the stress granule. Its subcellular location is the nucleus. It localises to the nucleolus. RNA-binding protein that inhibits processing of pre-let-7 miRNAs and regulates translation of mRNAs that control developmental timing, pluripotency and metabolism. Seems to recognize a common structural G-quartet (G4) feature in its miRNA and mRNA targets. 'Translational enhancer' that drives specific mRNAs to polysomes and increases the efficiency of protein synthesis. Its association with the translational machinery and target mRNAs results in an increased number of initiation events per molecule of mRNA and, indirectly, in mRNA stabilization. Suppressor of microRNA (miRNA) biogenesis, including that of let-7. Binds specific target miRNA precursors (pre-miRNAs), recognizing an 5'-GGAG-3' motif found in their terminal loop, and recruits uridylyltransferase. This results in the terminal uridylation of target pre-miRNAs. Uridylated pre-miRNAs fail to be processed by Dicer and undergo degradation. Localized to the periendoplasmic reticulum area, binds to a large number of spliced mRNAs and inhibits the translation of mRNAs destined for the ER, reducing the synthesis of transmembrane proteins, ER or Golgi lumen proteins, and secretory proteins. Binds to and enhances the translation of mRNAs for several metabolic enzymes, increasing glycolysis and oxidative phosphorylation. Which, with the let-7 repression may enhance tissue repair in adult tissue. The chain is Protein lin-28 homolog A (lin28a) from Xenopus tropicalis (Western clawed frog).